The chain runs to 131 residues: uncharacterized protein (131 aa).

Transmembrane regions (helical) follow at residues 5–25 (VQPI…YVLV) and 34–54 (MAVT…YVMN). The interval 62–131 (AAFKKAAKQS…KNKKKNRALF (70 aa)) is disordered. Basic residues-rich tracts occupy residues 66–92 (KAAK…RVSH) and 122–131 (KNKKKNRALF).

It localises to the cell membrane. This is an uncharacterized protein from Bacillus subtilis (strain 168).